The primary structure comprises 248 residues: Pyridoxine 5'-phosphate synthase (248 aa).

3-amino-2-oxopropyl phosphate is bound at residue N10. 12 to 13 (DH) is a binding site for 1-deoxy-D-xylulose 5-phosphate. R21 lines the 3-amino-2-oxopropyl phosphate pocket. The Proton acceptor role is filled by H46. 2 residues coordinate 1-deoxy-D-xylulose 5-phosphate: R48 and H53. The active-site Proton acceptor is the E73. T103 is a binding site for 1-deoxy-D-xylulose 5-phosphate. The Proton donor role is filled by H194. Residues G195 and 216 to 217 (GH) each bind 3-amino-2-oxopropyl phosphate.

Belongs to the PNP synthase family. In terms of assembly, homooctamer; tetramer of dimers.

Its subcellular location is the cytoplasm. The enzyme catalyses 3-amino-2-oxopropyl phosphate + 1-deoxy-D-xylulose 5-phosphate = pyridoxine 5'-phosphate + phosphate + 2 H2O + H(+). Its pathway is cofactor biosynthesis; pyridoxine 5'-phosphate biosynthesis; pyridoxine 5'-phosphate from D-erythrose 4-phosphate: step 5/5. In terms of biological role, catalyzes the complicated ring closure reaction between the two acyclic compounds 1-deoxy-D-xylulose-5-phosphate (DXP) and 3-amino-2-oxopropyl phosphate (1-amino-acetone-3-phosphate or AAP) to form pyridoxine 5'-phosphate (PNP) and inorganic phosphate. The sequence is that of Pyridoxine 5'-phosphate synthase from Legionella pneumophila (strain Lens).